We begin with the raw amino-acid sequence, 96 residues long: Large ribosomal subunit protein eL21 (96 aa).

The protein belongs to the eukaryotic ribosomal protein eL21 family.

This Methanoregula boonei (strain DSM 21154 / JCM 14090 / 6A8) protein is Large ribosomal subunit protein eL21.